The following is a 470-amino-acid chain: Uronate isomerase (470 aa).

It belongs to the metallo-dependent hydrolases superfamily. Uronate isomerase family.

It catalyses the reaction D-glucuronate = D-fructuronate. It carries out the reaction aldehydo-D-galacturonate = keto-D-tagaturonate. It functions in the pathway carbohydrate metabolism; pentose and glucuronate interconversion. The polypeptide is Uronate isomerase (Salmonella newport (strain SL254)).